We begin with the raw amino-acid sequence, 429 residues long: Cytochrome bc1 complex Rieske iron-sulfur subunit (429 aa).

The tract at residues methionine 1–valine 45 is disordered. 3 helical membrane-spanning segments follow: residues valine 96–phenylalanine 116, proline 137–tyrosine 157, and phenylalanine 207–isoleucine 227. The 95-residue stretch at arginine 316–valine 410 folds into the Rieske domain. Residues cysteine 353, histidine 355, cysteine 372, and histidine 375 each coordinate [2Fe-2S] cluster. Cysteine 358 and cysteine 374 are oxidised to a cystine.

Belongs to the Rieske iron-sulfur protein family. The cytochrome bc1 complex is composed of a cytochrome b (QcrB), the Rieske iron-sulfur protein (QcrA) and a diheme cytochrome c (QcrC) subunit. The cofactor is [2Fe-2S] cluster.

Its subcellular location is the cell membrane. Iron-sulfur subunit of the cytochrome bc1 complex, an essential component of the respiratory electron transport chain required for ATP synthesis. The bc1 complex catalyzes the oxidation of menaquinol and the reduction of cytochrome c in the respiratory chain. The bc1 complex operates through a Q-cycle mechanism that couples electron transfer to generation of the proton gradient that drives ATP synthesis. This is Cytochrome bc1 complex Rieske iron-sulfur subunit (qcrA) from Mycobacterium tuberculosis (strain CDC 1551 / Oshkosh).